The following is a 66-amino-acid chain: MAFLKKSLFLVLFLGLVSLSICDEEKRQDEDDDDDDDEEKRGVIDIIKGAGKDLIAHAIGKLAEKV.

Residues 1-22 (MAFLKKSLFLVLFLGLVSLSIC) form the signal peptide. Residues 23–39 (DEEKRQDEDDDDDDDEE) constitute a propeptide that is removed on maturation. Position 66 is a valine amide (valine 66).

As to expression, expressed by the skin glands.

The protein resides in the secreted. Has antibacterial activity against Gram-negative bacterium E.coli ATCC 25922 (MIC=320 uM) but not against S.pneumoniae ATCC 700603, S.choleraesuis ATCC 14028 or Gram-positive bacterium S.aureus ATCC 29313. Shows no hemolytic activity and no cytotoxicity. This Leptodactylus pustulatus (Ceara white-lipped frog) protein is Ocellatin-PT3.